A 253-amino-acid chain; its full sequence is Imidazole glycerol phosphate synthase subunit HisF (253 aa).

Residues D11 and D130 contribute to the active site.

The protein belongs to the HisA/HisF family. Heterodimer of HisH and HisF.

The protein localises to the cytoplasm. The catalysed reaction is 5-[(5-phospho-1-deoxy-D-ribulos-1-ylimino)methylamino]-1-(5-phospho-beta-D-ribosyl)imidazole-4-carboxamide + L-glutamine = D-erythro-1-(imidazol-4-yl)glycerol 3-phosphate + 5-amino-1-(5-phospho-beta-D-ribosyl)imidazole-4-carboxamide + L-glutamate + H(+). It functions in the pathway amino-acid biosynthesis; L-histidine biosynthesis; L-histidine from 5-phospho-alpha-D-ribose 1-diphosphate: step 5/9. Its function is as follows. IGPS catalyzes the conversion of PRFAR and glutamine to IGP, AICAR and glutamate. The HisF subunit catalyzes the cyclization activity that produces IGP and AICAR from PRFAR using the ammonia provided by the HisH subunit. This chain is Imidazole glycerol phosphate synthase subunit HisF, found in Acidobacterium capsulatum (strain ATCC 51196 / DSM 11244 / BCRC 80197 / JCM 7670 / NBRC 15755 / NCIMB 13165 / 161).